Here is a 313-residue protein sequence, read N- to C-terminus: Adhesin MafA 2/3 (313 aa).

A signal peptide spans 1–14 (MKTLLLLIPLVLTA). Cys-15 is lipidated: N-palmitoyl cysteine. Cys-15 is lipidated: S-diacylglycerol cysteine. Residues 282 to 298 (GDTTAQNRPDFKQNNGK) show a composition bias toward polar residues. The tract at residues 282-313 (GDTTAQNRPDFKQNNGKNPDVGNEVIRRRKGG) is disordered.

This sequence belongs to the MafA family.

It is found in the cell outer membrane. In Neisseria gonorrhoeae (strain ATCC 700825 / FA 1090), this protein is Adhesin MafA 2/3 (mafA2).